The primary structure comprises 120 residues: MTTQLKDINGAYAKAKYIRMSPRKVRRVLDQIRGRSYREALIVLEFMPYRACEPVLKVLRSAVANAETNRGLDPVDLVVSHAYADQGPRLKRFRPRAQGRAYQIQKPTCHITIAVSAEAS.

Belongs to the universal ribosomal protein uL22 family. As to quaternary structure, part of the 50S ribosomal subunit.

Its function is as follows. This protein binds specifically to 23S rRNA; its binding is stimulated by other ribosomal proteins, e.g. L4, L17, and L20. It is important during the early stages of 50S assembly. It makes multiple contacts with different domains of the 23S rRNA in the assembled 50S subunit and ribosome. Functionally, the globular domain of the protein is located near the polypeptide exit tunnel on the outside of the subunit, while an extended beta-hairpin is found that lines the wall of the exit tunnel in the center of the 70S ribosome. The protein is Large ribosomal subunit protein uL22 of Acaryochloris marina (strain MBIC 11017).